The following is a 192-amino-acid chain: Ion-translocating oxidoreductase complex subunit B (192 aa).

A hydrophobic region spans residues 1–26; it reads MNAIWIAVAAVSLLGLAFGAILGYAS. The 60-residue stretch at 32-91 folds into the 4Fe-4S domain; the sequence is EDDPVVEKIDEILPQSQCGQCGYPGCRPYAEAISCNGEKINRCAPGGEAVMLKIAELLNV. [4Fe-4S] cluster contacts are provided by C49, C52, C57, C74, C117, C120, C123, C127, C147, C150, C153, and C157. 4Fe-4S ferredoxin-type domains are found at residues 108–137 and 138–167; these read MVAVIDENNCIGCTKCIQACPVDAIVGATR and VMHTVMSDLCTGCNLCVDPCPTHCISLQPV.

This sequence belongs to the 4Fe4S bacterial-type ferredoxin family. RnfB subfamily. In terms of assembly, the complex is composed of six subunits: RsxA, RsxB, RsxC, RsxD, RsxE and RsxG. [4Fe-4S] cluster serves as cofactor.

The protein resides in the cell inner membrane. In terms of biological role, part of a membrane-bound complex that couples electron transfer with translocation of ions across the membrane. Required to maintain the reduced state of SoxR. This is Ion-translocating oxidoreductase complex subunit B from Shigella boydii serotype 4 (strain Sb227).